A 539-amino-acid chain; its full sequence is CTP synthase (539 aa).

The interval 1–268 (MSFKCIFLTG…STFITEKLGL (268 aa)) is amidoligase domain. Ser-14 contributes to the CTP binding site. Ser-14 is a binding site for UTP. 15–20 (SLGKGL) contributes to the ATP binding site. Residue Tyr-55 participates in L-glutamine binding. Residue Asp-72 coordinates ATP. The Mg(2+) site is built by Asp-72 and Glu-142. Residues 149 to 151 (DIE), 188 to 193 (KTKPTQ), and Lys-224 each bind CTP. Residues 188–193 (KTKPTQ) and Lys-224 contribute to the UTP site. Positions 294–533 (RIGLVGKYVQ…IQAAILYSRN (240 aa)) constitute a Glutamine amidotransferase type-1 domain. Position 353 (Gly-353) interacts with L-glutamine. Catalysis depends on Cys-380, which acts as the Nucleophile; for glutamine hydrolysis. Residues 381 to 384 (LGMQ), Glu-404, and Arg-461 each bind L-glutamine. Catalysis depends on residues His-506 and Glu-508.

This sequence belongs to the CTP synthase family. As to quaternary structure, homotetramer.

The enzyme catalyses UTP + L-glutamine + ATP + H2O = CTP + L-glutamate + ADP + phosphate + 2 H(+). The catalysed reaction is L-glutamine + H2O = L-glutamate + NH4(+). It catalyses the reaction UTP + NH4(+) + ATP = CTP + ADP + phosphate + 2 H(+). The protein operates within pyrimidine metabolism; CTP biosynthesis via de novo pathway; CTP from UDP: step 2/2. With respect to regulation, allosterically activated by GTP, when glutamine is the substrate; GTP has no effect on the reaction when ammonia is the substrate. The allosteric effector GTP functions by stabilizing the protein conformation that binds the tetrahedral intermediate(s) formed during glutamine hydrolysis. Inhibited by the product CTP, via allosteric rather than competitive inhibition. Its function is as follows. Catalyzes the ATP-dependent amination of UTP to CTP with either L-glutamine or ammonia as the source of nitrogen. Regulates intracellular CTP levels through interactions with the four ribonucleotide triphosphates. The chain is CTP synthase from Chlamydia felis (strain Fe/C-56) (Chlamydophila felis).